Reading from the N-terminus, the 409-residue chain is Chaetoglobosin A biosynthesis cluster protein C (409 aa).

The HTH CENPB-type domain occupies 51 to 120; it reads DLPANSRKLT…VKRQPQLRTR (70 aa). Positions 84-113 form a DNA-binding region, H-T-H motif; sequence RGVEDMANHLLRERDAPPVGKLWAHNFVKR. Disordered stretches follow at residues 243-269 and 320-350; these read PTHP…ETRS and ANEP…QDPL. The span at 255–269 shows a compositional bias: polar residues; the sequence is PWASKTPYNAQETRS.

It localises to the nucleus. Part of the gene cluster that mediates the biosynthesis of chaetoglobosin A which has a unique inhibitory activity against actin polymerization in mammalian cells. Chaetoglobosin A and its intermediates are involved in the morphological differentiation of C.globosum. The first step of the pathway is the synthesis of prochaetoglobosin I via condensation of one acetyl-CoA, 8 malonyl-CoA, and a L-tryptophan molecule by the PKS-NRPS hybrid synthetase cheA, followed by reduction of backbone double bond to install desired geometry by the enoyl reductase cheB. Further multiple oxidation steps performed by the cytochrome P450 monooxygenases cheE and cheG, as well as by the FAD-linked oxidoreductase cheF, lead to the formation of chaetoglobosin A. Depending on the order of action of these reductases, distinct intermediates can be identified. Within the pathway, the cytochrome P450 monooxygenase cheE catalyzes a stereospecific epoxidation on prochaetoglobosin I, cytoglobosin D, and chaetoglobosin J intermediates. The FAD-linked oxidoreductase cheF performs dehydrogenation of the C-20 hydroxyl groups in the 20-dihyrochaetoglobosin A and cytoglobosin D intermediates. Finally, the cytochrome P450 monooxygenase cheG can catalyze the stereospecific dihydroxylation of prochaetoglobosin I and prochaetoglobosin IV at C-19 and C-20, respectively. The Diels-Alderase cheD may play a role in the post-PKS-NRPS biosynthetic steps catalyzing Diels-Alder cyclization. The protein is Chaetoglobosin A biosynthesis cluster protein C of Chaetomium globosum (strain ATCC 6205 / CBS 148.51 / DSM 1962 / NBRC 6347 / NRRL 1970) (Soil fungus).